The primary structure comprises 968 residues: RNA polymerase-associated protein RapA (968 aa).

Residues 164–334 form the Helicase ATP-binding domain; sequence DVGRRHAPRV…FARLRLLDPN (171 aa). 177-184 is an ATP binding site; that stretch reads DEVGLGKT. The DEAH box motif lies at 280-283; sequence DEAH. The region spanning 490–662 is the Helicase C-terminal domain; sequence RVEWLMGYLT…YLASPDETEG (173 aa).

This sequence belongs to the SNF2/RAD54 helicase family. RapA subfamily. Interacts with the RNAP. Has a higher affinity for the core RNAP than for the holoenzyme. Its ATPase activity is stimulated by binding to RNAP.

In terms of biological role, transcription regulator that activates transcription by stimulating RNA polymerase (RNAP) recycling in case of stress conditions such as supercoiled DNA or high salt concentrations. Probably acts by releasing the RNAP, when it is trapped or immobilized on tightly supercoiled DNA. Does not activate transcription on linear DNA. Probably not involved in DNA repair. The chain is RNA polymerase-associated protein RapA from Escherichia coli O127:H6 (strain E2348/69 / EPEC).